A 329-amino-acid chain; its full sequence is GDP-mannose transporter (329 aa).

Residues 1 to 11 (MADKGSVAAKS) lie on the Cytoplasmic side of the membrane. Residues 12 to 32 (LTNSAPLSIFSYCAASILMTV) traverse the membrane as a helical segment. The Lumenal portion of the chain corresponds to 33–40 (TNKYAVSG). A helical membrane pass occupies residues 41–61 (VDFNFNFFLLAVQGIVCITLI). Topologically, residues 62–83 (SSLKQLNVITFREFNKVEAKKW) are cytoplasmic. A helical transmembrane segment spans residues 84 to 104 (FPIAVLLVVMIYTSSKALQYL). Residues 105–107 (SIP) are Lumenal-facing. A helical transmembrane segment spans residues 108–128 (IYTIFKNLTIILIAYGEVIWF). The Cytoplasmic portion of the chain corresponds to 129–131 (GGR). A helical membrane pass occupies residues 132–152 (VTNLALGSFVLMVLSSAVASY). The Lumenal segment spans residues 153 to 163 (GDSNVDTGKLN). The chain crosses the membrane as a helical span at residues 164–184 (FNIGYFWMFTNCFSSAAFVLF). Residues 185 to 196 (MRKRIKLTNFKD) are Cytoplasmic-facing. The helical transmembrane segment at 197 to 217 (FDTMYYNNLLSIPILLFASLT) threads the bilayer. Over 218 to 237 (TEDWSAKNIAQNFPEDTKYA) the chain is Lumenal. Residues 238-258 (VIASMIISGMSAVGISYTSAW) traverse the membrane as a helical segment. Residues 259 to 266 (CVRVTSST) are Cytoplasmic-facing. A helical membrane pass occupies residues 267-287 (TYSMVGALNKLPIALSGLLFF). The Lumenal segment spans residues 288 to 290 (KAP). The helical transmembrane segment at 291–311 (INFYSISSIFIGFAAGLVYAI) threads the bilayer. Residues 312 to 329 (AKQKQKKEDELQLPTDKS) lie on the Cytoplasmic side of the membrane.

The protein belongs to the TPT transporter family. SLC35D subfamily. In terms of assembly, homooligomer.

Its subcellular location is the golgi apparatus membrane. It is found in the cytoplasmic vesicle membrane. The protein localises to the endoplasmic reticulum membrane. In terms of biological role, involved in the import of GDP-mannose from the cytoplasm into the Golgi lumen. The sequence is that of GDP-mannose transporter (VIG4) from Komagataella pastoris (Yeast).